A 435-amino-acid polypeptide reads, in one-letter code: 3-phosphoshikimate 1-carboxyvinyltransferase (435 aa).

K15, S16, and R20 together coordinate 3-phosphoshikimate. K15 provides a ligand contact to phosphoenolpyruvate. Residues G96 and R124 each contribute to the phosphoenolpyruvate site. 3-phosphoshikimate is bound by residues S169, Q171, T195, D319, and K346. Q171 is a binding site for phosphoenolpyruvate. D319 serves as the catalytic Proton acceptor. The phosphoenolpyruvate site is built by R350 and R394.

The protein belongs to the EPSP synthase family. As to quaternary structure, monomer.

The protein localises to the cytoplasm. It catalyses the reaction 3-phosphoshikimate + phosphoenolpyruvate = 5-O-(1-carboxyvinyl)-3-phosphoshikimate + phosphate. It participates in metabolic intermediate biosynthesis; chorismate biosynthesis; chorismate from D-erythrose 4-phosphate and phosphoenolpyruvate: step 6/7. Functionally, catalyzes the transfer of the enolpyruvyl moiety of phosphoenolpyruvate (PEP) to the 5-hydroxyl of shikimate-3-phosphate (S3P) to produce enolpyruvyl shikimate-3-phosphate and inorganic phosphate. The sequence is that of 3-phosphoshikimate 1-carboxyvinyltransferase from Chloroherpeton thalassium (strain ATCC 35110 / GB-78).